We begin with the raw amino-acid sequence, 563 residues long: NAD-dependent malic enzyme (563 aa).

The active-site Proton donor is the tyrosine 101. Position 154 (arginine 154) interacts with NAD(+). Lysine 172 functions as the Proton acceptor in the catalytic mechanism. Residues glutamate 243, aspartate 244, and aspartate 267 each contribute to the a divalent metal cation site. Positions 267 and 416 each coordinate NAD(+).

Belongs to the malic enzymes family. In terms of assembly, homotetramer. Mg(2+) serves as cofactor. The cofactor is Mn(2+).

It carries out the reaction (S)-malate + NAD(+) = pyruvate + CO2 + NADH. It catalyses the reaction oxaloacetate + H(+) = pyruvate + CO2. This Pseudomonas syringae pv. tomato (strain ATCC BAA-871 / DC3000) protein is NAD-dependent malic enzyme.